Reading from the N-terminus, the 257-residue chain is Mitochondrial distribution and morphology protein 12 (257 aa).

The SMP-LTD domain occupies 1 to 256 (MSFEINWEKL…WPSWVNLDFN (256 aa)). Residues 74–98 (YEEDNETSSEMHGRDGQNVGESGEE) form a disordered region.

It belongs to the MDM12 family. In terms of assembly, component of the ER-mitochondria encounter structure (ERMES) or MDM complex, composed of MMM1, MDM10, MDM12 and MDM34. An MMM1 homodimer associates with one molecule of MDM12 on each side in a pairwise head-to-tail manner, and the SMP-LTD domains of MMM1 and MDM12 generate a continuous hydrophobic tunnel for phospholipid trafficking.

The protein resides in the mitochondrion outer membrane. Its subcellular location is the endoplasmic reticulum membrane. Functionally, component of the ERMES/MDM complex, which serves as a molecular tether to connect the endoplasmic reticulum (ER) and mitochondria. Components of this complex are involved in the control of mitochondrial shape and protein biogenesis, and function in nonvesicular lipid trafficking between the ER and mitochondria. MDM12 is required for the interaction of the ER-resident membrane protein MMM1 and the outer mitochondrial membrane-resident beta-barrel protein MDM10. The MDM12-MMM1 subcomplex functions in the major beta-barrel assembly pathway that is responsible for biogenesis of all mitochondrial outer membrane beta-barrel proteins, and acts in a late step after the SAM complex. The MDM10-MDM12-MMM1 subcomplex further acts in the TOM40-specific pathway after the action of the MDM12-MMM1 complex. Essential for establishing and maintaining the structure of mitochondria and maintenance of mtDNA nucleoids. The protein is Mitochondrial distribution and morphology protein 12 of Candida glabrata (strain ATCC 2001 / BCRC 20586 / JCM 3761 / NBRC 0622 / NRRL Y-65 / CBS 138) (Yeast).